The following is a 75-amino-acid chain: Xibalbin-13 2 (75 aa).

The signal sequence occupies residues 1-27; that stretch reads MKEANTRRYIYLCLVVVLLSIIITTEA. The propeptide occupies 28–30; sequence EDD. 4 disulfides stabilise this stretch: cysteine 34–cysteine 49, cysteine 41–cysteine 54, cysteine 48–cysteine 65, and cysteine 56–cysteine 63.

The protein belongs to the xibalbin-13 family. As to expression, expressed by the venom gland and the whole body.

Its subcellular location is the secreted. Functionally, probable neurotoxin. Strongly inhibits voltage-gated potassium channels (Kv1.1/KCNA1, Kv1.2/KCNA2, Kv1.3/KCNA3, and Kv1.6/KCNA6, with the highest toxicity against Kv1.1 (85.1% inhibition at 1 uM)) and mildly inhibits sodium channels (Nav1.2/SCN2A, Nav1.4/SCN4A, Nav1.5/SCN5A, Nav1.6/SCN8A, and BgNav). Induces activation of protein kinase A type II (PKA-II) and MAP kinase Erk1/2 in primary nociceptive and non-nociceptive sensory neurons. Does not show cytotoxic activity. Does not have an impact on Ca2+, cAMP, and NO signaling in the cell types analyzed. Does not interfere with the adhesion of leukocytes to endothelial cells. This is Xibalbin-13 2 from Xibalbanus tulumensis (Blind cave remipede).